The primary structure comprises 242 residues: Phosphoribosylaminoimidazole-succinocarboxamide synthase (242 aa).

The protein belongs to the SAICAR synthetase family.

It catalyses the reaction 5-amino-1-(5-phospho-D-ribosyl)imidazole-4-carboxylate + L-aspartate + ATP = (2S)-2-[5-amino-1-(5-phospho-beta-D-ribosyl)imidazole-4-carboxamido]succinate + ADP + phosphate + 2 H(+). It functions in the pathway purine metabolism; IMP biosynthesis via de novo pathway; 5-amino-1-(5-phospho-D-ribosyl)imidazole-4-carboxamide from 5-amino-1-(5-phospho-D-ribosyl)imidazole-4-carboxylate: step 1/2. The chain is Phosphoribosylaminoimidazole-succinocarboxamide synthase from Prochlorococcus marinus (strain MIT 9303).